A 264-amino-acid polypeptide reads, in one-letter code: MIYRIISHIPSIFFKPAYDLYERYLLEKVKAGVIPKHVAIIMDGNRRWARKREKPPWYGHFFGSKKLEEIVEWCHELGIRILTVYAFSTENFKRSKEEVDRLMKLFEEKFRELVTDRRVHEYGIRVNVMGRKELLPKNVREAAEEAERVTRKYNNYFLNIALAYGGRSEIVDAIKDIVNDVLEGRLKLEDINEEIVRKYLYVPNMPDPDIVIRTGGEVRISNFLLYQIAYSELFFVDVYFPEFRKIDFLRIIREFQKRERRFGR.

The active site involves aspartate 43. A Mg(2+)-binding site is contributed by aspartate 43. Residues 44-47 (GNRR), tryptophan 48, histidine 60, and 88-90 (STE) each bind substrate. Asparagine 91 acts as the Proton acceptor in catalysis. Substrate-binding positions include phenylalanine 92, arginine 94, arginine 213, and 219-221 (RIS). Mg(2+) is bound at residue glutamate 232.

It belongs to the UPP synthase family. In terms of assembly, homodimer. It depends on Mg(2+) as a cofactor.

The enzyme catalyses geranylgeranyl diphosphate + 7 isopentenyl diphosphate = tri-trans,hepta-cis-undecaprenyl diphosphate + 7 diphosphate. Its function is as follows. Catalyzes the sequential condensation of isopentenyl diphosphate (IPP) with geranylgeranyl diphosphate (GGPP) to yield (2Z,6Z,10Z,14Z,18Z,22Z,26Z,30E,34E,38E)-undecaprenyl diphosphate (tritrans,heptacis-UPP). It is probably the precursor of glycosyl carrier lipids. This is Tritrans,polycis-undecaprenyl-diphosphate synthase (geranylgeranyl-diphosphate specific) from Pyrococcus furiosus (strain ATCC 43587 / DSM 3638 / JCM 8422 / Vc1).